An 856-amino-acid chain; its full sequence is DNA mismatch repair protein MutS (856 aa).

Position 618–625 (618–625) interacts with ATP; the sequence is GPNMGGKS.

The protein belongs to the DNA mismatch repair MutS family.

Functionally, this protein is involved in the repair of mismatches in DNA. It is possible that it carries out the mismatch recognition step. This protein has a weak ATPase activity. This Shewanella baltica (strain OS155 / ATCC BAA-1091) protein is DNA mismatch repair protein MutS.